Here is a 332-residue protein sequence, read N- to C-terminus: Isopentenyl-diphosphate delta-isomerase (332 aa).

6-7 (RK) is a binding site for substrate. FMN-binding positions include 65 to 67 (AMT), Ser-95, and Asn-123. Residue 95-97 (SGR) coordinates substrate. Gln-157 contacts substrate. Glu-158 contributes to the Mg(2+) binding site. FMN contacts are provided by residues Lys-187, Thr-217, 264-266 (GVY), Ala-285, and 285-286 (AR).

This sequence belongs to the IPP isomerase type 2 family. As to quaternary structure, homooctamer. Dimer of tetramers. The cofactor is FMN. Requires NADPH as cofactor. Mg(2+) is required as a cofactor.

It is found in the cytoplasm. It catalyses the reaction isopentenyl diphosphate = dimethylallyl diphosphate. Its activity is regulated as follows. Competitively inhibited by N,N-dimethyl-2-amino-1-ethyl diphosphate (NIPP) and isopentyl diphosphate. Functionally, involved in the biosynthesis of isoprenoids. Catalyzes the 1,3-allylic rearrangement of the homoallylic substrate isopentenyl (IPP) to its allylic isomer, dimethylallyl diphosphate (DMAPP). This Thermus thermophilus (strain ATCC BAA-163 / DSM 7039 / HB27) protein is Isopentenyl-diphosphate delta-isomerase.